A 320-amino-acid chain; its full sequence is Mitochondrial ribosome-associated GTPase 1 (320 aa).

The 173-residue stretch at 37–209 folds into the CP-type G domain; that stretch reads LKQMRASPRK…LLDTPGVLPP (173 aa). GTP is bound by residues 81–84, 153–158, and Gly205; these read NKMD and NVGKSS.

The protein belongs to the TRAFAC class YlqF/YawG GTPase family. MTG1 subfamily.

It localises to the mitochondrion inner membrane. In terms of biological role, plays a role in the regulation of the mitochondrial ribosome assembly and of translational activity. Displays mitochondrial GTPase activity. The polypeptide is Mitochondrial ribosome-associated GTPase 1 (Ictalurus punctatus (Channel catfish)).